The chain runs to 61 residues: Short neurotoxin 1 (61 aa).

4 disulfides stabilise this stretch: Cys3–Cys23, Cys17–Cys40, Cys42–Cys53, and Cys54–Cys59.

Belongs to the three-finger toxin family. Short-chain subfamily. Type I alpha-neurotoxin sub-subfamily. Expressed by the venom gland.

Its subcellular location is the secreted. Functionally, binds to muscle nicotinic acetylcholine receptor (nAChR) and inhibit acetylcholine from binding to the receptor, thereby impairing neuromuscular transmission. In Naja philippinensis (Philippine cobra), this protein is Short neurotoxin 1.